Reading from the N-terminus, the 436-residue chain is Ribosomal protein uS12 methylthiotransferase RimO (436 aa).

One can recognise an MTTase N-terminal domain in the interval 2–114 (PNLYLVSLGC…IDEMILKKQN (113 aa)). [4Fe-4S] cluster-binding residues include Cys-11, Cys-45, Cys-77, Cys-146, Cys-150, and Cys-153. The Radical SAM core domain maps to 132–363 (TGSSYHAYIK…IKKQIEGSFK (232 aa)). In terms of domain architecture, TRAM spans 363-434 (KSLVGEVIKV…KDKLIGEIIC (72 aa)).

This sequence belongs to the methylthiotransferase family. RimO subfamily. [4Fe-4S] cluster is required as a cofactor.

Its subcellular location is the cytoplasm. It carries out the reaction L-aspartate(89)-[ribosomal protein uS12]-hydrogen + (sulfur carrier)-SH + AH2 + 2 S-adenosyl-L-methionine = 3-methylsulfanyl-L-aspartate(89)-[ribosomal protein uS12]-hydrogen + (sulfur carrier)-H + 5'-deoxyadenosine + L-methionine + A + S-adenosyl-L-homocysteine + 2 H(+). Catalyzes the methylthiolation of an aspartic acid residue of ribosomal protein uS12. The polypeptide is Ribosomal protein uS12 methylthiotransferase RimO (Campylobacter fetus subsp. fetus (strain 82-40)).